The chain runs to 113 residues: Hydrogenase maturation factor HybF (113 aa).

Histidine 2 and glutamate 3 together coordinate Ni(2+). Residues cysteine 73, cysteine 76, cysteine 89, and cysteine 92 each coordinate Zn(2+).

It belongs to the HypA/HybF family. HybF subfamily.

In terms of biological role, involved in the maturation of [NiFe] hydrogenases. Required for nickel insertion into the metal center of the hydrogenase. The chain is Hydrogenase maturation factor HybF from Escherichia coli O157:H7.